The chain runs to 478 residues: Cysteine protease ATG4B (478 aa).

A compositionally biased stretch (polar residues) spans 1-15 (MTSLPDRGVSSSSSD). Residues 1-20 (MTSLPDRGVSSSSSDPLCEG) are disordered. Cys164 acts as the Nucleophile in catalysis. Active-site residues include Asp361 and His363.

Belongs to the peptidase C54 family. In terms of assembly, interacts with ATG8. As to expression, constitutively expressed.

It localises to the cytoplasm. The enzyme catalyses [protein]-C-terminal L-amino acid-glycyl-phosphatidylethanolamide + H2O = [protein]-C-terminal L-amino acid-glycine + a 1,2-diacyl-sn-glycero-3-phosphoethanolamine. Functionally, cysteine protease that plays a key role in autophagy by mediating both proteolytic activation and delipidation of ATG8 family proteins. The protease activity is required for proteolytic activation of ATG8 family proteins: cleaves the C-terminal amino acid of ATG8 proteins to reveal a C-terminal glycine. Exposure of the glycine at the C-terminus is essential for ATG8 proteins conjugation to phosphatidylethanolamine (PE) and insertion to membranes, which is necessary for autophagy. In addition to the protease activity, also mediates delipidation of PE-conjugated ATG8 proteins. The chain is Cysteine protease ATG4B (ATG4B) from Oryza sativa subsp. indica (Rice).